Reading from the N-terminus, the 761-residue chain is MTSHLDDEGLHPMVSTLLGGGTLPTVPFKAYTRERMMELRTTKASMTRPENLSEDFNGEDGKFSPLKWLEHRWEIEGIKNRPMSKKIDSLCAGADENTGLSPQRRAFSSGCKAPTDDKGRDGEYERLGGHGKNWRNGSTGGADKFASRGNDFKPSFQKGNQLERGTRGAEWKKDTTRGAKFAPRREERLTSLSGSEKLPEWADGPTTMDDMIELRGFDEPKKVKNKKNPKEKKEKEAVKAPEPVECVGSRPSSTGLKTSEPIDDPAIAYSSSGGGALPATDQELAALLGCLDIQKTSRKIDGDDMAWAHKSEETAGGTSRLSRFFAKKNKSPELDAMLSSVGGGNDENVANPMLARLFGHSGGDNNASSSGAGDIKGGMRLEDLEKGMESKEPSKVSPLQDPSQQAQLLQHLQKFAKQQAESGQHIHHHRQPTPPNGGPQHQQHLHHPMVHPGMQIIADPSLLASFAQNPVILNAYVENQLQEAVNAAIRANNGQQLPPQLHEQLRMASMRNKAFLQSQTLTFVSLQQQHQNIQQHQQQQQHHQHKGRTPAMIPASVQRQLQKSSSNADQKKEKTSQSPPESNQETSDAHNQSDAMNQLKKLHMQQNYANMVQAMNSGVGWARGNGVVNGQQQHPQQQLPPNVQMLMAQHQQAQMQHLKMMMSRAQQQHMLMAKIAQMQQQQAQMANMQERQGPSHNQQQHQPVVPSELSQVGPIQTPLEKLLASVGVQGSQFTGSGDRIPSSVRPMSLEDLEKQLTAVPK.

Disordered stretches follow at residues 101 to 274, 386 to 446, 557 to 592, 681 to 702, and 730 to 761; these read SPQR…SSGG, KGME…QHLH, VQRQ…AHNQ, QQAQ…QQHQ, and GSQF…AVPK. Composition is skewed to basic and acidic residues over residues 114-128, 164-189, and 212-222; these read PTDD…ERLG, RGTR…EERL, and IELRGFDEPKK. 4 stretches are compositionally biased toward polar residues: residues 400 to 410, 557 to 568, 576 to 592, and 690 to 702; these read QDPSQQAQLLQ, VQRQLQKSSSNA, SQSP…AHNQ, and ERQG…QQHQ.

Interacts with cgh-1. Interacts with ife-1 and oma-1. In terms of tissue distribution, in the embryo, significantly enriched in the germ cell lineage.

The protein localises to the cytoplasm. Involved in translational repression of multiple mRNAs in the distal gonad. Recruited to the 3' untranslated region (UTR) of zif-1 by oma-1 and is required for translational repression of zif-1. May also be involved in translational repression of mei-1 through recruitment to the mei-1 3' UTR by oma-1. Required for oogenesis but not spermatogenesis, for P granule formation and for the localization of car-1 and cgh-1 to P granules. Required for normal spindle orientation in early embryos. The polypeptide is Translational repressor ifet-1 (Caenorhabditis elegans).